A 135-amino-acid polypeptide reads, in one-letter code: Large ribosomal subunit protein mL41A (135 aa).

A mitochondrion-targeting transit peptide spans 1–13 (MGLISKIARGLVR).

The protein belongs to the mitochondrion-specific ribosomal protein mL41 family. Component of the mitochondrial ribosome large subunit (39S) which comprises a 16S rRNA and about 50 distinct proteins.

The protein localises to the mitochondrion. Component of the mitochondrial ribosome large subunit. Also involved in apoptosis and cell cycle. The sequence is that of Large ribosomal subunit protein mL41A (mrpl41-a) from Xenopus laevis (African clawed frog).